Consider the following 189-residue polypeptide: Elongation factor P (189 aa).

The residue at position 34 (Lys34) is an N6-(3,6-diaminohexanoyl)-5-hydroxylysine.

The protein belongs to the elongation factor P family. May be beta-lysylated on the epsilon-amino group of Lys-34 by the combined action of EpmA and EpmB, and then hydroxylated on the C5 position of the same residue by EpmC (if this protein is present). Lysylation is critical for the stimulatory effect of EF-P on peptide-bond formation. The lysylation moiety may extend toward the peptidyltransferase center and stabilize the terminal 3-CCA end of the tRNA. Hydroxylation of the C5 position on Lys-34 may allow additional potential stabilizing hydrogen-bond interactions with the P-tRNA.

It is found in the cytoplasm. Its pathway is protein biosynthesis; polypeptide chain elongation. Its function is as follows. Involved in peptide bond synthesis. Alleviates ribosome stalling that occurs when 3 or more consecutive Pro residues or the sequence PPG is present in a protein, possibly by augmenting the peptidyl transferase activity of the ribosome. Modification of Lys-34 is required for alleviation. This chain is Elongation factor P, found in Nitrosococcus oceani (strain ATCC 19707 / BCRC 17464 / JCM 30415 / NCIMB 11848 / C-107).